The chain runs to 305 residues: Membrane glycoprotein UL142 (305 aa).

Positions 1-19 (MRIEWACWLFGYFVSSVGS) are cleaved as a signal peptide. The Lumenal segment spans residues 20-270 (ERSLSYRYHL…QKTNNTTSPW (251 aa)). The chain crosses the membrane as a helical span at residues 271–288 (VYAIPMGATATIGAGLYI). Residues 289-305 (GKHFTPVKFVYEVWRGQ) lie on the Cytoplasmic side of the membrane.

Interacts with host MICA and ULBP3.

It localises to the host endoplasmic reticulum membrane. The protein localises to the host Golgi apparatus membrane. Its function is as follows. Participates in the inhibition of the host immune response. Prevents host NK cell-mediated lysis of the infected cell by preventing the KLRK1 ligand 3/ULBP3 trafficking to the cell surface. Also retains another KLRK1 ligand, MHC class I-related chain A/MICA, in the Golgi apparatus to avoid its surface expression. The sequence is that of Membrane glycoprotein UL142 (UL142) from Homo sapiens (Human).